The following is a 344-amino-acid chain: MDHEADAYRTDLMTITRYVLNEQSRNPEARGDLTILLSHIVLGCKFVASAVNKAGLAKLIGLAGETNVQGEEQKKLDVLSNEVFVKALVSSGRTCVLVSEEDEEATFVDPALRGKYCVCFDPLDGSSNIDCGVSIGTIFGIYMIKDKDNVTLEDVLQPGKNMVAAGYCMYGSSCTLVLSTGNGVNGFTLDPSLGEFILTHPDIKIPKKGKIYSVNEGNAKNWDEPTAKFVEKCKFPKDGSSPKSLRYIGSMVADVHRTLLYGGVFLYPADKKSPNGKLRVLYEVFPMSFLMEQAGGQSFTGKERALDLVPTKIHERSPIFLGSFEDVEEIKGLYAAQAKLEHNH.

5 residues coordinate Mg(2+): glutamate 71, glutamate 100, aspartate 121, leucine 123, and aspartate 124. Substrate contacts are provided by residues 124–127, asparagine 215, tyrosine 247, tyrosine 267, and lysine 277; that span reads DGSS. Residue glutamate 283 coordinates Mg(2+).

The protein belongs to the FBPase class 1 family. It depends on Mg(2+) as a cofactor.

It localises to the cytoplasm. It catalyses the reaction beta-D-fructose 1,6-bisphosphate + H2O = beta-D-fructose 6-phosphate + phosphate. This Oryza coarctata (Wild rice) protein is Fructose-1,6-bisphosphatase, cytosolic.